The sequence spans 195 residues: Probable GTP-binding protein EngB (195 aa).

Residues 24-195 enclose the EngB-type G domain; it reads GLSEVGLSGR…QIWNVIEKYL (172 aa). GTP contacts are provided by residues 32-39, 59-63, 77-80, 144-147, and 176-178; these read GRSNVGKS, GKTQT, DVPG, TKED, and YSS. Residues Ser39 and Thr61 each coordinate Mg(2+).

It belongs to the TRAFAC class TrmE-Era-EngA-EngB-Septin-like GTPase superfamily. EngB GTPase family. Mg(2+) serves as cofactor.

Functionally, necessary for normal cell division and for the maintenance of normal septation. The sequence is that of Probable GTP-binding protein EngB from Staphylococcus saprophyticus subsp. saprophyticus (strain ATCC 15305 / DSM 20229 / NCIMB 8711 / NCTC 7292 / S-41).